The following is a 292-amino-acid chain: GTP cyclohydrolase FolE2 (292 aa).

It belongs to the GTP cyclohydrolase IV family.

The catalysed reaction is GTP + H2O = 7,8-dihydroneopterin 3'-triphosphate + formate + H(+). It participates in cofactor biosynthesis; 7,8-dihydroneopterin triphosphate biosynthesis; 7,8-dihydroneopterin triphosphate from GTP: step 1/1. Converts GTP to 7,8-dihydroneopterin triphosphate. The sequence is that of GTP cyclohydrolase FolE2 from Staphylococcus aureus (strain Mu50 / ATCC 700699).